The chain runs to 395 residues: Na(+)/H(+) antiporter NhaA 1 (395 aa).

11 helical membrane passes run 11-31, 63-83, 99-119, 129-149, 158-178, 183-203, 223-243, 258-278, 282-302, 332-352, and 364-384; these read FFSS…LAMV, MLLW…GLEV, VFPV…YLAF, GWAI…ALLG, IFLM…IALF, LSML…ALNL, VLKS…MIPL, VLHP…NAGV, GVTL…GLFI, IMAV…IATL, and WAKL…YLIL.

Belongs to the NhaA Na(+)/H(+) (TC 2.A.33) antiporter family.

The protein localises to the cell inner membrane. It carries out the reaction Na(+)(in) + 2 H(+)(out) = Na(+)(out) + 2 H(+)(in). Its function is as follows. Na(+)/H(+) antiporter that extrudes sodium in exchange for external protons. The chain is Na(+)/H(+) antiporter NhaA 1 from Klebsiella pneumoniae subsp. pneumoniae (strain ATCC 700721 / MGH 78578).